Reading from the N-terminus, the 48-residue chain is uncharacterized protein (48 aa).

This is an uncharacterized protein from Acidianus filamentous virus 2 (isolate Italy/Pozzuoli) (AFV-2).